Here is a 500-residue protein sequence, read N- to C-terminus: MNYFPWLTIIVVFPIFAGSLIFFLPHKGNRVIRWYTICICILELLLTTYAFCYHFQSDDPLIQLVEDYKWIDFFDFHWRLGIDGLSIGPILLTGFITTLATLAAWPVTRDSRLFHFLMLAMYSGQIGSFSSRDLLLFFIMWELELIPVYLLLAMWGGKKRLYSATKFILYTAGGSVFLLMGVLGVALYGSNEPTLNFETSVNQSYPVVLEIIFYIGFFIAFAVKSPIIPLHTWLPDTHGEAHYSTCMLLAGILLKMGAYGLIRINMELLPHAHSIFSPWLMIIGTIQIIYAASTSLGQRNLKKRIAYPSVSHMGFIIIGISSLTDTGLNGALLQIISHGFIGAALFFLAGTTYDRIRLVYLDEMGGIAIPMPKMFTMFSSFSMASLALPGMSGFVAELIVFFGIITGQKYLLIPKLLITFVMAIGIILTPIYSLSMPRQMFYGYKLFNAPKDSFFDSGPRELFLSISIFLPVIGIGIYPDFVLSLAVDKVEVILSNFFYR.

13 helical membrane passes run 4–24 (FPWL…IFFL), 35–55 (YTIC…CYHF), 87–107 (IGPI…AWPV), 134–154 (LLLF…LLAM), 167–187 (FILY…GVAL), 208–228 (VLEI…SPII), 242–262 (HYST…YGLI), 272–292 (AHSI…IYAA), 305–325 (IAYP…SLTD), 330–350 (GALL…FLAG), 386–406 (LALP…GIIT), 411–431 (LLIP…LTPI), and 462–482 (LFLS…PDFV).

This sequence belongs to the complex I subunit 4 family.

It localises to the plastid. The protein resides in the chloroplast thylakoid membrane. It catalyses the reaction a plastoquinone + NADH + (n+1) H(+)(in) = a plastoquinol + NAD(+) + n H(+)(out). The enzyme catalyses a plastoquinone + NADPH + (n+1) H(+)(in) = a plastoquinol + NADP(+) + n H(+)(out). The polypeptide is NAD(P)H-quinone oxidoreductase chain 4, chloroplastic (Solanum tuberosum (Potato)).